We begin with the raw amino-acid sequence, 183 residues long: Streptavidin-V1 (183 aa).

Positions 1–24 (MRKIVVAAIAVSLTTVSITASASA) are cleaved as a signal peptide. Positions 37 to 159 (AEAGITGTWY…GHDTFTKVKP (123 aa)) constitute an Avidin-like domain. Positions 67 and 78 each coordinate biotin. The Cell attachment site; atypical signature appears at 83–85 (RYD). Tryptophan 116, tryptophan 132, and tryptophan 144 together coordinate biotin.

Belongs to the avidin/streptavidin family. As to quaternary structure, homotetramer.

The protein resides in the secreted. Functionally, the biological function of streptavidin is not known. Forms a strong non-covalent specific complex with biotin (one molecule of biotin per subunit of streptavidin). This chain is Streptavidin-V1, found in Streptomyces violaceus (Streptomyces venezuelae).